The sequence spans 78 residues: Small ribosomal subunit protein uS17 (78 aa).

It belongs to the universal ribosomal protein uS17 family. In terms of assembly, part of the 30S ribosomal subunit.

Functionally, one of the primary rRNA binding proteins, it binds specifically to the 5'-end of 16S ribosomal RNA. In Rhizobium meliloti (strain 1021) (Ensifer meliloti), this protein is Small ribosomal subunit protein uS17.